The chain runs to 540 residues: Transcription termination/antitermination protein NusA (540 aa).

One can recognise an S1 motif domain in the interval 144–214 (GQVIEARVED…SMWPITLSRS (71 aa)). Positions 319-386 (DTSIEIVVPA…QGIFGIKKRR (68 aa)) constitute a KH domain. The disordered stretch occupies residues 457–540 (VAAPTPTPAP…KQTFDNFDDL (84 aa)). Residues 461–489 (TPTPAPQPTPAPTKVEPVPPPVSVTPKPI) are compositionally biased toward pro residues. Residues 512–522 (DDSKTKPEKSS) are compositionally biased toward basic and acidic residues. Over residues 523–540 (AKTNTPQTKQTFDNFDDL) the composition is skewed to polar residues.

Belongs to the NusA family. Monomer. Binds directly to the core enzyme of the DNA-dependent RNA polymerase and to nascent RNA.

The protein localises to the cytoplasm. Functionally, participates in both transcription termination and antitermination. In Mycoplasma pneumoniae (strain ATCC 29342 / M129 / Subtype 1) (Mycoplasmoides pneumoniae), this protein is Transcription termination/antitermination protein NusA.